We begin with the raw amino-acid sequence, 915 residues long: Probable dipeptidyl-aminopeptidase B (915 aa).

The disordered stretch occupies residues 1–82 (MAPPFTDDPE…GAFLGPPGVP (82 aa)). The Cytoplasmic segment spans residues 1–94 (MAPPFTDDPE…RQPMDRGFRR (94 aa)). Residues 15-32 (STSRLSQDSLSSVSTTSL) are compositionally biased toward low complexity. Residues 36–62 (RIQEEMDRDPSASRSARRDLLPATKDE) show a composition bias toward basic and acidic residues. Residues 95 to 115 (ILIIIGAVFVGAWLAGLGIFV) form a helical; Signal-anchor for type II membrane protein membrane-spanning segment. At 116–915 (LSGSYKHESD…IDTKKRRHVS (800 aa)) the chain is on the vacuolar side. Asparagine 355 and asparagine 577 each carry an N-linked (GlcNAc...) asparagine glycan. Residue serine 760 is the Charge relay system of the active site. A glycan (N-linked (GlcNAc...) asparagine) is linked at asparagine 819. Residues aspartate 837 and histidine 870 each act as charge relay system in the active site.

This sequence belongs to the peptidase S9B family.

Its subcellular location is the vacuole membrane. The catalysed reaction is Release of an N-terminal dipeptide, Xaa-Yaa-|-Zaa-, from a polypeptide, preferentially when Yaa is Pro, provided Zaa is neither Pro nor hydroxyproline.. Its function is as follows. Type IV dipeptidyl-peptidase which removes N-terminal dipeptides sequentially from polypeptides having unsubstituted N-termini provided that the penultimate residue is proline. In Metarhizium robertsii (strain ARSEF 23 / ATCC MYA-3075) (Metarhizium anisopliae (strain ARSEF 23)), this protein is Probable dipeptidyl-aminopeptidase B (DAPB).